The chain runs to 1216 residues: Sodium/potassium/calcium exchanger 1 (1216 aa).

The Extracellular segment spans residues 1–446 (MGKLIRMGAQ…DLFSVEERRQ (446 aa)). Residues 94-196 (EATAGRDGTP…KYSPSPLGRM (103 aa)) are disordered. 2 stretches are compositionally biased toward polar residues: residues 110-135 (NTPS…TPTG) and 144-166 (SATP…SYTR). Residues asparagine 290 and asparagine 303 are each glycosylated (N-linked (GlcNAc...) asparagine). A helical membrane pass occupies residues 447–467 (GWVVLHIFGMMYVFVALAIVC). Residues 468-491 (DEYFVPALGVITDKLQISEDVAGA) lie on the Cytoplasmic side of the membrane. An Alpha-1 repeat occupies 488–528 (VAGATFMAAGGSAPELFTSLIGVFISHSNVGIGTIVGSAVF). A helical transmembrane segment spans residues 492 to 512 (TFMAAGGSAPELFTSLIGVFI). Over 513 to 518 (SHSNVG) the chain is Extracellular. A helical transmembrane segment spans residues 519–539 (IGTIVGSAVFNILFVIGTCAL). At 540-557 (FSREILNLTWWPLFRDIT) the chain is on the cytoplasmic side. Residues 558-578 (FYIFDLMMLILFFLDSLIAWW) traverse the membrane as a helical segment. A topological domain (extracellular) is located at residue glutamate 579. The chain crosses the membrane as a helical span at residues 580–600 (SVLLLLAYAFYVFTMKWNQQL). At 601-1024 (ELWVKEQLNK…SLEWPETRRK (424 aa)) the chain is on the cytoplasmic side. Serine 652 is modified (phosphoserine). A disordered region spans residues 677–1018 (GEARPSKDKE…ENEQPLSLEW (342 aa)). Over residues 702–712 (AESKPEEEPAK) the composition is skewed to basic and acidic residues. Threonine 717 carries the phosphothreonine modification. Residues 796–811 (DEDEGEIQAEGGEVKG) form a 1; approximate repeat. The segment at 796 to 928 (DEDEGEIQAE…QAGEAGEVEG (133 aa)) is 8 X 17 AA tandem repeats of D-E-D-E-G-E-I-Q-A-G-E-[GA]-G-E-V-[EK]-G. 6 tandem repeats follow at residues 812–828 (DEDE…EVEG), 829–845 (DEDE…EVEG), 846–862 (DEDE…EVEG), 863–879 (DEDE…EVEG), 880–896 (DEDE…EVEG), and 897–913 (DEDE…EVKG). Composition is skewed to acidic residues over residues 824–834 (GEVEGDEDEGE), 841–851 (GEVEGDEDEGE), 858–868 (GEVEGDEDEGE), 875–885 (GEVEGDEDEGE), 892–902 (GEVEGDEDEGE), 924–941 (GEVE…DEGE), and 981–1011 (GDSE…EENE). The 8; approximate repeat unit spans residues 914–928 (DEGEIQAGEAGEVEG). Residues 1025-1045 (QAIYLFLLPIVFPLWLTVPDV) traverse the membrane as a helical segment. Over 1046–1052 (RRLEAKK) the chain is Extracellular. Residues 1053-1073 (FFVITFLGSILWIAMFSYLMV) traverse the membrane as a helical segment. Topologically, residues 1074-1088 (WWAHQVGETIGISEE) are cytoplasmic. A helical membrane pass occupies residues 1089 to 1109 (IMGLTILAAGTSIPDLITSVI). An Alpha-2 repeat occupies 1096–1127 (AAGTSIPDLITSVIVARKGLGDMAVSSSVGSN). Residues 1110–1127 (VARKGLGDMAVSSSVGSN) lie on the Extracellular side of the membrane. The helical transmembrane segment at 1128-1148 (IFDITVGLPLPWMLFSLINGL) threads the bilayer. The Cytoplasmic segment spans residues 1149 to 1157 (QPVAVSSNG). A helical membrane pass occupies residues 1158–1178 (LFCAIVLLFLMLLFVISSIAL). Residues 1179-1185 (CKWRMNK) lie on the Extracellular side of the membrane. The chain crosses the membrane as a helical span at residues 1186-1206 (ILGFTMFLLYFVFLIISVMLE). The Cytoplasmic segment spans residues 1207–1216 (DRIISCPVSV).

This sequence belongs to the Ca(2+):cation antiporter (CaCA) (TC 2.A.19) family. SLC24A subfamily. In terms of processing, the uncleaved signal sequence is required for efficient membrane targeting and proper membrane integration and topology. Post-translationally, glycosylated. Retina.

It is found in the cell membrane. It carries out the reaction Ca(2+)(out) + K(+)(out) + 4 Na(+)(in) = Ca(2+)(in) + K(+)(in) + 4 Na(+)(out). Functionally, calcium, potassium:sodium antiporter that transports 1 Ca(2+) and 1 K(+) in exchange for 4 Na(+). Critical component of the visual transduction cascade, controlling the calcium concentration of outer segments during light and darkness. Light causes a rapid lowering of cytosolic free calcium in the outer segment of both retinal rod and cone photoreceptors and the light-induced lowering of calcium is caused by extrusion via this protein which plays a key role in the process of light adaptation. This is Sodium/potassium/calcium exchanger 1 (SLC24A1) from Bos taurus (Bovine).